Consider the following 605-residue polypeptide: Elongation factor 4 (605 aa).

One can recognise a tr-type G domain in the interval 4–186 (SATRNFCIIA…AIVARVPAPK (183 aa)). Residues 16–21 (DHGKST) and 133–136 (NKID) each bind GTP.

Belongs to the TRAFAC class translation factor GTPase superfamily. Classic translation factor GTPase family. LepA subfamily.

Its subcellular location is the cell membrane. The catalysed reaction is GTP + H2O = GDP + phosphate + H(+). Required for accurate and efficient protein synthesis under certain stress conditions. May act as a fidelity factor of the translation reaction, by catalyzing a one-codon backward translocation of tRNAs on improperly translocated ribosomes. Back-translocation proceeds from a post-translocation (POST) complex to a pre-translocation (PRE) complex, thus giving elongation factor G a second chance to translocate the tRNAs correctly. Binds to ribosomes in a GTP-dependent manner. This chain is Elongation factor 4, found in Dehalococcoides mccartyi (strain ATCC BAA-2266 / KCTC 15142 / 195) (Dehalococcoides ethenogenes (strain 195)).